Reading from the N-terminus, the 616-residue chain is Homeodomain-interacting protein kinase 4 (616 aa).

In terms of domain architecture, Protein kinase spans 11-347 (YDIIEVLGKG…PSAALRHPFV (337 aa)). ATP is bound by residues 17–25 (LGKGTFGEV) and Lys40. Residue Asp136 is the Proton acceptor of the active site. Residues 486-616 (HKARKPPAGS…SFLQHVTGHH (131 aa)) form a disordered region. Over residues 496-511 (KSDSNFSNLIRLSQVS) the composition is skewed to polar residues. Phosphoserine is present on Ser511.

This sequence belongs to the protein kinase superfamily. CMGC Ser/Thr protein kinase family. HIPK subfamily. Autophosphorylated.

It localises to the cytoplasm. The enzyme catalyses L-seryl-[protein] + ATP = O-phospho-L-seryl-[protein] + ADP + H(+). It catalyses the reaction L-threonyl-[protein] + ATP = O-phospho-L-threonyl-[protein] + ADP + H(+). In terms of biological role, protein kinase that phosphorylates human TP53 at Ser-9, and thus induces TP53 repression of BIRC5 promoter. May act as a corepressor of transcription factors (Potential). The chain is Homeodomain-interacting protein kinase 4 (HIPK4) from Homo sapiens (Human).